A 392-amino-acid polypeptide reads, in one-letter code: 2'-deamino-2'-hydroxyneamine transaminase (392 aa).

Lys-249 is modified (N6-(pyridoxal phosphate)lysine).

This sequence belongs to the class-III pyridoxal-phosphate-dependent aminotransferase family. Pyridoxal 5'-phosphate serves as cofactor.

It catalyses the reaction neamine + 2-oxoglutarate = 6'-oxoparomamine + L-glutamate. It carries out the reaction 2'-deamino-2'-hydroxyneamine + 2-oxoglutarate = 2'-deamino-2'-hydroxy-6'-dehydroparomamine + L-glutamate. It participates in antibiotic biosynthesis; kanamycin biosynthesis. Its function is as follows. Aminotransferase that has 6'-oxoglucosaminyl:L-glutamate aminotransferase activity by catalyzing pyridoxal-5'-phosphate-mediated transamination leading to the conversion of paromamine to neamine in the biosynthetic pathway of kanamycin B. This chain is 2'-deamino-2'-hydroxyneamine transaminase (kacL), found in Streptomyces kanamyceticus.